A 220-amino-acid chain; its full sequence is MKTFLIFALLAMAATMATAQFDPSEQYQPYPEQQQPILQQQQMLLQQQQQMLLQQQPLLQVLQQQLNPCRQFLVQQCSPVAVVPFLRSQILQQSSCQVMRQQCCRQLEQIPEQLRCPAIHSVVQAIIMQQQQFFQPQMQQQFFQPQMQQVTQGIFQPQMQQVTQGIFQPQLQQVTQGIFQPQMQGQIEGMRAFALQALPAMCDVYVPPHCPVATAPLGGF.

The signal sequence occupies residues 1–19; it reads MKTFLIFALLAMAATMATA. Gln-20 is subject to Pyrrolidone carboxylic acid. 2 repeat units span residues 41–48 and 49–56. Positions 41 to 56 are 2 X 8 AA tandem repeats of Q-Q-M-L-L-Q-Q-Q; the sequence is QQMLLQQQQQMLLQQQ. Disulfide bonds link Cys-69/Cys-202, Cys-77/Cys-96, Cys-103/Cys-104, and Cys-116/Cys-210. Residues 128 to 137 form a 2-1 repeat; it reads MQQQQFFQPQ. A 2 X 10 AA tandem repeats of M-Q-Q-Q-Q-F-F-Q-P-Q region spans residues 128-146; that stretch reads MQQQQFFQPQMQQQFFQPQ. The 2-2; approximate repeat unit spans residues 138 to 146; it reads MQQQFFQPQ.

It belongs to the gliadin/glutenin family. As to quaternary structure, monomer.

The protein localises to the vacuole. Its function is as follows. Seed storage protein. Serves as a source of nitrogen, carbon, and sulfur for the young developing seedling. This is Avenin-3 from Avena sativa (Oat).